The sequence spans 62 residues: UPF0291 protein CLM_2971 (62 aa).

Belongs to the UPF0291 family.

It is found in the cytoplasm. This chain is UPF0291 protein CLM_2971, found in Clostridium botulinum (strain Kyoto / Type A2).